The sequence spans 208 residues: Uracil phosphoribosyltransferase (208 aa).

Residues Arg78, Arg103, and 130-138 (DPMLATGGS) contribute to the 5-phospho-alpha-D-ribose 1-diphosphate site. Uracil is bound by residues Ile193 and 198-200 (GDA). Asp199 lines the 5-phospho-alpha-D-ribose 1-diphosphate pocket.

Belongs to the UPRTase family. It depends on Mg(2+) as a cofactor.

It catalyses the reaction UMP + diphosphate = 5-phospho-alpha-D-ribose 1-diphosphate + uracil. Its pathway is pyrimidine metabolism; UMP biosynthesis via salvage pathway; UMP from uracil: step 1/1. Its activity is regulated as follows. Allosterically activated by GTP. Functionally, catalyzes the conversion of uracil and 5-phospho-alpha-D-ribose 1-diphosphate (PRPP) to UMP and diphosphate. This is Uracil phosphoribosyltransferase from Yersinia pestis.